Here is a 306-residue protein sequence, read N- to C-terminus: Foldase protein PrsA (306 aa).

Residues 1–20 form the signal peptide; sequence MRRKIALFLALIFVGVSLVS. Cys21 is lipidated: N-palmitoyl cysteine. Residue Cys21 is the site of S-diacylglycerol cysteine attachment. One can recognise a PpiC domain in the interval 165 to 255; sequence FEVMRARHIL…YGYHIIKSEG (91 aa).

The protein belongs to the PrsA family.

Its subcellular location is the cell membrane. It carries out the reaction [protein]-peptidylproline (omega=180) = [protein]-peptidylproline (omega=0). In terms of biological role, plays a major role in protein secretion by helping the post-translocational extracellular folding of several secreted proteins. The sequence is that of Foldase protein PrsA from Caldanaerobacter subterraneus subsp. tengcongensis (strain DSM 15242 / JCM 11007 / NBRC 100824 / MB4) (Thermoanaerobacter tengcongensis).